The sequence spans 299 residues: MRKSEFNAKSCFLMIGICVFNLNSSSCIIKTNAEHCSKRLFSFCYLGVGVIKKPLHLGNRKNMLFLSFLLVCLCEEVQMLNLTTTEVSATEFASIASKNMETNVSTSSDYLTGKSETTFSANPETWGKNVTEISIASVAYLNQSSMVTSTLAVGTTNRSSGNNVNVTTSSFPTVKGDEAQDIETFFTVILASTLSDVSEKTPQGLPTKSTPKKTVQALWETDTVQVPELTDTNEGDEEYFKDFLSSLVIWICGISFVGAFIIVIVILYNWYKKDKQRSLLWDEENKPDVQIRRDAKTCR.

A signal peptide spans M1–C27. A helical transmembrane segment spans residues L247–L267.

It localises to the host membrane. The protein is Protein U23 (U23) of Human herpesvirus 6B (strain Z29) (HHV-6 variant B).